Reading from the N-terminus, the 1820-residue chain is Cation channel sperm-associated targeting subunit tau (1820 aa).

The C2 domain maps to 87-222 (DSEELEITQE…QKGCFIEEVQ (136 aa)). Disordered stretches follow at residues 360 to 383 (SEET…ELEN), 403 to 443 (LLDN…TEVH), 695 to 722 (EVSM…SSME), and 838 to 857 (SSTK…SGSS). Polar residues predominate over residues 415–443 (PTLNQSDQDNSTADASKNDESTPSPTEVH).

Component of the CatSper complex or CatSpermasome composed of the core pore-forming members CATSPER1, CATSPER2, CATSPER3 and CATSPER4 as well as auxiliary members CATSPERB, CATSPERG, CATSPERD, CATSPERE, CATSPERZ, C2CD6/CATSPERT, TMEM249, TMEM262 and EFCAB9. HSPA1 may be an additional auxiliary complex member. The core complex members CATSPER1, CATSPER2, CATSPER3 and CATSPER4 form a heterotetrameric channel. The auxiliary CATSPERB, CATSPERG, CATSPERD and CATSPERE subunits form a pavilion-like structure over the pore which stabilizes the complex through interactions with CATSPER4, CATSPER3, CATSPER1 and CATSPER2 respectively. SLCO6C1 interacts with CATSPERE and TMEM262/CATSPERH interacts with CATSPERB, further stabilizing the complex. C2CD6/CATSPERT interacts at least with CATSPERD and is required for targeting the CatSper complex in the flagellar membrane. As to expression, expressed in testis (at protein level).

The protein localises to the cell projection. It localises to the cilium. Its subcellular location is the flagellum membrane. Auxiliary component of the CatSper complex, a complex involved in sperm cell hyperactivation. Sperm cell hyperactivation is needed for sperm motility which is essential late in the preparation of sperm for fertilization. Required for CatSper complex targeting and trafficking into the quadrilinear nanodomains. Targets the preassembled CatSper complexes to elongating flagella, where it links the channel-carrying vesicles and motor proteins. This is Cation channel sperm-associated targeting subunit tau from Homo sapiens (Human).